We begin with the raw amino-acid sequence, 172 residues long: Large ribosomal subunit protein bL9 (172 aa).

It belongs to the bacterial ribosomal protein bL9 family.

In terms of biological role, binds to the 23S rRNA. The chain is Large ribosomal subunit protein bL9 from Chlamydia caviae (strain ATCC VR-813 / DSM 19441 / 03DC25 / GPIC) (Chlamydophila caviae).